We begin with the raw amino-acid sequence, 45 residues long: MDDFKQAILLLVVDFVFVIILLLVLTFVVPRLQQSSTINTGLRTV.

The helical transmembrane segment at 8–28 (ILLLVVDFVFVIILLLVLTFV) threads the bilayer.

The protein resides in the host rough endoplasmic reticulum membrane. Transports viral genome to neighboring plant cells directly through plasmosdesmata, without any budding. The movement protein allows efficient cell to cell propagation, by bypassing the host cell wall barrier. Two movement proteins, p6, Hsp70h and three structural proteins, CP, CPm, and P64 are essential for cell-cell movement. Also plays a role in virion formation. Together with CPm and p64, encapsidates the 5'-terminal portion of the viral genome. The polypeptide is Movement protein p5 (Grapevine leafroll-associated virus 3 (isolate United States/NY1) (GLRaV-3)).